The sequence spans 819 residues: Proteome of basal body protein 15 (819 aa).

2 stretches are compositionally biased toward low complexity: residues Pro-46–Arg-59 and Arg-572–Thr-581. Disordered regions lie at residues Pro-46 to Gly-72 and Glu-564 to Val-590. Positions Tyr-546 to His-580 form a coiled coil.

It localises to the cytoplasm. It is found in the cytoskeleton. The protein resides in the microtubule organizing center. The protein localises to the centrosome. Its subcellular location is the centriole. The protein is Proteome of basal body protein 15 of Chlamydomonas reinhardtii (Chlamydomonas smithii).